The chain runs to 186 residues: MTDPSVDEALARRAAQGDQYAFGQLVQRHGRALAQAARSFGVPESDVDDIVQDTFIAAWHALDDFDSDKLFRPWLFRIGLNKMRDLRRFRQVRHFLFGAKDIEDAELTSDVPGPEREVSARLELAKIMQVLNRLDLASREIIILTSFVGMSHPEAAMALGTSAKAVESRVARARAKLTALLQSSQV.

Residues 49-62 (DIVQDTFIAAWHAL) carry the Polymerase core binding motif. Residues 152 to 171 (HPEAAMALGTSAKAVESRVA) constitute a DNA-binding region (H-T-H motif).

It belongs to the sigma-70 factor family. ECF subfamily.

In terms of biological role, sigma factors are initiation factors that promote the attachment of RNA polymerase to specific initiation sites and are then released. This sigma factor regulates the genes for a membrane-located efflux system that confers resistance to nickel, cobalt and cadmium. The protein is RNA polymerase sigma factor NccH (nccH) of Alcaligenes xylosoxydans xylosoxydans (Achromobacter xylosoxidans).